The following is a 347-amino-acid chain: NADH-ubiquinone oxidoreductase chain 2 (347 aa).

9 helical membrane passes run 1–21 (MNPF…MIVM), 59–79 (YFMT…INLL), 93–115 (TASM…HFWV), 149–169 (INPN…GWGG), 178–198 (IMAY…IYNP), 201–221 (TILN…MFAL), 239–259 (IITT…PLTG), 274–294 (DSII…YFYM), and 325–345 (LLPT…MLVV).

It belongs to the complex I subunit 2 family. In terms of assembly, core subunit of respiratory chain NADH dehydrogenase (Complex I) which is composed of 45 different subunits. Interacts with TMEM242.

Its subcellular location is the mitochondrion inner membrane. It carries out the reaction a ubiquinone + NADH + 5 H(+)(in) = a ubiquinol + NAD(+) + 4 H(+)(out). In terms of biological role, core subunit of the mitochondrial membrane respiratory chain NADH dehydrogenase (Complex I) which catalyzes electron transfer from NADH through the respiratory chain, using ubiquinone as an electron acceptor. Essential for the catalytic activity and assembly of complex I. This Hippopotamus amphibius (Hippopotamus) protein is NADH-ubiquinone oxidoreductase chain 2.